We begin with the raw amino-acid sequence, 215 residues long: Lysozyme-like protein 5 (215 aa).

An N-terminal signal peptide occupies residues 1 to 17 (MKHFFITILLFCSVVSA). A Ch-type lysozyme domain is found at 18–215 (ARNGIDINSP…GVSVDMNYIP (198 aa)). Active-site residues include Asp23, Asp113, and Glu115.

Belongs to the glycosyl hydrolase 25 family.

Functionally, plays a role in resistance to Gram-positive bacteria S.aureus or B.thuringiensis infection. The sequence is that of Lysozyme-like protein 5 from Caenorhabditis elegans.